Reading from the N-terminus, the 135-residue chain is Large-conductance mechanosensitive channel (135 aa).

The next 2 helical transmembrane spans lie at 10–30 (FAMR…AAFG) and 76–96 (GVFI…FLAI).

The protein belongs to the MscL family. In terms of assembly, homopentamer.

The protein resides in the cell inner membrane. Channel that opens in response to stretch forces in the membrane lipid bilayer. May participate in the regulation of osmotic pressure changes within the cell. The polypeptide is Large-conductance mechanosensitive channel (Cronobacter sakazakii (strain ATCC BAA-894) (Enterobacter sakazakii)).